Reading from the N-terminus, the 250-residue chain is NAD(P)H-quinone oxidoreductase subunit S, chloroplastic (250 aa).

Residues 1–48 (MATSSITIPTIRTPIHRSKFLGQTHQFSTVNRSVFPPPKQQSKLYQVK) constitute a chloroplast transit peptide. Lys52 participates in a covalent cross-link: Glycyl lysine isopeptide (Lys-Gly) (interchain with G-Cter in ubiquitin). Composition is skewed to basic and acidic residues over residues 76–94 (QRNI…NETE) and 106–115 (VPEDGFEKEM). Disordered stretches follow at residues 76–163 (QRNI…KPKA) and 222–250 (REKG…EAAP). Over residues 136–146 (NPPPPPPPPPA) the composition is skewed to pro residues.

As to quaternary structure, part of the chloroplast NDH complex, composed of a mixture of chloroplast and nucleus encoded subunits. Component of the electron donor-binding subcomplex, at least composed of NDHS, NDHT and NDHU. Interacts with the NDH subcomplex A via the protein NDHT and NDHU. Post-translationally, arg-193 is the critical site for the high affinity binding of NDH to ferredoxin.

Its subcellular location is the plastid. It localises to the chloroplast thylakoid membrane. It catalyses the reaction a plastoquinone + NADH + (n+1) H(+)(in) = a plastoquinol + NAD(+) + n H(+)(out). It carries out the reaction a plastoquinone + NADPH + (n+1) H(+)(in) = a plastoquinol + NADP(+) + n H(+)(out). Functionally, NDH shuttles electrons from NAD(P)H:plastoquinone, via FMN and iron-sulfur (Fe-S) centers, to quinones in the photosynthetic chain and possibly in a chloroplast respiratory chain. The immediate electron acceptor for the enzyme in this species is believed to be plastoquinone. Couples the redox reaction to proton translocation, and thus conserves the redox energy in a proton gradient. Required for the efficient operation of ferredoxin-dependent plastoquinone reduction. Forms the electron donor-binding subcomplex in association with the NDHT and NDHU subunits. This chain is NAD(P)H-quinone oxidoreductase subunit S, chloroplastic, found in Arabidopsis thaliana (Mouse-ear cress).